Reading from the N-terminus, the 877-residue chain is DNA mismatch repair protein MutS (877 aa).

Gly630–Ser637 serves as a coordination point for ATP.

It belongs to the DNA mismatch repair MutS family.

Functionally, this protein is involved in the repair of mismatches in DNA. It is possible that it carries out the mismatch recognition step. This protein has a weak ATPase activity. This Jannaschia sp. (strain CCS1) protein is DNA mismatch repair protein MutS.